Here is a 474-residue protein sequence, read N- to C-terminus: tRNA modification GTPase MnmE (474 aa).

Arg35, Glu92, and Lys135 together coordinate (6S)-5-formyl-5,6,7,8-tetrahydrofolate. The 166-residue stretch at 231 to 396 (GLHVVLAGQP…LRAALLEIAG (166 aa)) folds into the TrmE-type G domain. K(+) is bound at residue Asn241. GTP-binding positions include 241-246 (NVGKSS), 260-266 (TPIAGTT), 285-288 (DTAG), and 377-379 (SAR). Ser245 is a binding site for Mg(2+). K(+)-binding residues include Thr260, Ile262, and Thr265. Thr266 lines the Mg(2+) pocket. Residue Lys474 coordinates (6S)-5-formyl-5,6,7,8-tetrahydrofolate.

The protein belongs to the TRAFAC class TrmE-Era-EngA-EngB-Septin-like GTPase superfamily. TrmE GTPase family. In terms of assembly, homodimer. Heterotetramer of two MnmE and two MnmG subunits. K(+) is required as a cofactor.

The protein localises to the cytoplasm. Functionally, exhibits a very high intrinsic GTPase hydrolysis rate. Involved in the addition of a carboxymethylaminomethyl (cmnm) group at the wobble position (U34) of certain tRNAs, forming tRNA-cmnm(5)s(2)U34. This is tRNA modification GTPase MnmE from Ralstonia nicotianae (strain ATCC BAA-1114 / GMI1000) (Ralstonia solanacearum).